Reading from the N-terminus, the 245-residue chain is Phycocyanobilin:ferredoxin oxidoreductase (245 aa).

It belongs to the HY2 family.

The catalysed reaction is (2R,3Z)-phycocyanobilin + 4 oxidized [2Fe-2S]-[ferredoxin] = biliverdin IXalpha + 4 reduced [2Fe-2S]-[ferredoxin] + 4 H(+). Its function is as follows. Catalyzes the four-electron reduction of biliverdin IX-alpha (2-electron reduction at both the A and D rings); the reaction proceeds via an isolatable 2-electron intermediate, 181,182-dihydrobiliverdin. In Gloeothece citriformis (strain PCC 7424) (Cyanothece sp. (strain PCC 7424)), this protein is Phycocyanobilin:ferredoxin oxidoreductase.